The sequence spans 160 residues: Nucleotide-binding protein VSAL_I1728 (160 aa).

It belongs to the YajQ family.

Its function is as follows. Nucleotide-binding protein. In Aliivibrio salmonicida (strain LFI1238) (Vibrio salmonicida (strain LFI1238)), this protein is Nucleotide-binding protein VSAL_I1728.